A 242-amino-acid chain; its full sequence is Probable transcriptional regulatory protein Bmul_0984/BMULJ_02280 (242 aa).

This sequence belongs to the TACO1 family.

It localises to the cytoplasm. The chain is Probable transcriptional regulatory protein Bmul_0984/BMULJ_02280 from Burkholderia multivorans (strain ATCC 17616 / 249).